The primary structure comprises 147 residues: 3-dehydroquinate dehydratase (147 aa).

Catalysis depends on Tyr24, which acts as the Proton acceptor. Positions 75, 81, and 88 each coordinate substrate. His101 serves as the catalytic Proton donor. Substrate contacts are provided by residues 102-103 (LS) and Arg112.

It belongs to the type-II 3-dehydroquinase family. Homododecamer.

It catalyses the reaction 3-dehydroquinate = 3-dehydroshikimate + H2O. It functions in the pathway metabolic intermediate biosynthesis; chorismate biosynthesis; chorismate from D-erythrose 4-phosphate and phosphoenolpyruvate: step 3/7. Functionally, catalyzes a trans-dehydration via an enolate intermediate. This Caulobacter sp. (strain K31) protein is 3-dehydroquinate dehydratase.